Here is a 387-residue protein sequence, read N- to C-terminus: MQNFTYWNPTKLIFGRGEVERLPEELKPYGKNVLLVYGGGSIKRSGLYDQVIEQLNKAGATVHELAGVEPNPRVSTVNKGVAICKEQNIDFLLAVGGGSVIDCTKAIAAGAKYDGDAWDIVTKKHQPKDALPFGTVLTLAATGSEMNSGSVITNWETKEKYGWGSPLVFPKFSILDPVNTFTVPKNHTIYGMVDMMSHVFEQYFHHVSNTPYQDRMCESLLRTVIETAPKLINDLENYELRETILYTGTIALNGMLSMGARGDWATHNIEHAVSAVYDIPHAGGLAILFPNWMRHTLSENPARMKQLAVRVFDVEEAGKTDEEIALEGIDKLSAFWTSLGAPNRLADYDINDEQLDTIADKAMANGTFGQFKSLNKEDVLSILKASL.

It belongs to the iron-containing alcohol dehydrogenase family.

It functions in the pathway alcohol metabolism; butanol biosynthesis. The polypeptide is Probable NADH-dependent butanol dehydrogenase 1 (yugJ) (Bacillus subtilis (strain 168)).